A 149-amino-acid polypeptide reads, in one-letter code: UPF0178 protein Cphy_3042 (149 aa).

Basic residues predominate over residues 112–128; that stretch reads QRRHGKQNLHSKNNKKR. Residues 112 to 132 are disordered; it reads QRRHGKQNLHSKNNKKRTTGD.

This sequence belongs to the UPF0178 family.

The sequence is that of UPF0178 protein Cphy_3042 from Lachnoclostridium phytofermentans (strain ATCC 700394 / DSM 18823 / ISDg) (Clostridium phytofermentans).